A 689-amino-acid chain; its full sequence is MSEKTFLVEIGTEELPPKALRSLVESFAANFTVELDNAGLAHGTVQWFAAPRRLALKVANLAEAQPDREIEKRGPAIAQAFDAEGKPSKAAEGWARGCGITVDQAERLTTDKGEWLLYRAHVKGESTEALLPNMVATSLAKLPIPKLMRWGASDVHFVRPVHTVTLLLGDKVIPATILGIQSDRVIRGHRFMGEPEFTIDNADQYPEILRERGKVIADYEERKAKIKADAEEAARKIGGNADLSESLLEEVASLVEWPVVLTAKFEEKFLAVPAEALVYTMKGDQKYFPVYANDGKLLPNFIFVANIESKDPQQIISGNEKVVRPRLADAEFFFNTDRKKRLEDNLPRLQTVLFQQQLGTLRDKTDRIQALAGWIAEQIGADVNHATRAGLLSKCDLMTNMVFEFTDTQGVMGMHYACHDGEAEDVAVALNEQYQPRFAGDDLPSNPVACALAIADKMDTLAGIFGIGQHPKGDKDPFALRRAALGVLRIIVEKNLNLDLQTLTEEAVRLYGDKLTNANVVDDVIDFMLGRFRAWYQDEGYTVDTIQAVLARRPTRPADFDARMKAVSHFRTLDAAAALAAANKRVSNILAKSDEVLSDRVNASTLKEPEEIKLAMQVVVLRDKLEPYFAEGRYQDALVELAELREPVDAFFDKVMVMVDDKELRLNRLTMLEKLRELFLRVADISLLQ.

The protein belongs to the class-II aminoacyl-tRNA synthetase family. As to quaternary structure, tetramer of two alpha and two beta subunits.

It is found in the cytoplasm. The catalysed reaction is tRNA(Gly) + glycine + ATP = glycyl-tRNA(Gly) + AMP + diphosphate. This chain is Glycine--tRNA ligase beta subunit, found in Shigella boydii serotype 4 (strain Sb227).